Reading from the N-terminus, the 192-residue chain is UPF0149 protein YgfB (192 aa).

It belongs to the UPF0149 family.

In Salmonella typhi, this protein is UPF0149 protein YgfB.